A 306-amino-acid chain; its full sequence is Elongation factor Ts (306 aa).

The involved in Mg(2+) ion dislocation from EF-Tu stretch occupies residues 80 to 83 (TDFV).

The protein belongs to the EF-Ts family.

It is found in the cytoplasm. Its function is as follows. Associates with the EF-Tu.GDP complex and induces the exchange of GDP to GTP. It remains bound to the aminoacyl-tRNA.EF-Tu.GTP complex up to the GTP hydrolysis stage on the ribosome. In Methylorubrum populi (strain ATCC BAA-705 / NCIMB 13946 / BJ001) (Methylobacterium populi), this protein is Elongation factor Ts.